The sequence spans 118 residues: Small ribosomal subunit protein uS13 (118 aa).

Positions 94–118 (GLPVRGQRTKTNARTRKGPRKPIKK) are disordered.

It belongs to the universal ribosomal protein uS13 family. In terms of assembly, part of the 30S ribosomal subunit. Forms a loose heterodimer with protein S19. Forms two bridges to the 50S subunit in the 70S ribosome.

Located at the top of the head of the 30S subunit, it contacts several helices of the 16S rRNA. In the 70S ribosome it contacts the 23S rRNA (bridge B1a) and protein L5 of the 50S subunit (bridge B1b), connecting the 2 subunits; these bridges are implicated in subunit movement. Contacts the tRNAs in the A and P-sites. The sequence is that of Small ribosomal subunit protein uS13 from Klebsiella pneumoniae (strain 342).